Consider the following 322-residue polypeptide: Cysteine protease yopT1 (322 aa).

Residues 42 to 69 are disordered; it reads LSHSNRQKKLSATIKHNQSSRSMLDRKL. Active-site residues include Cys139, His258, and Asp274.

This sequence belongs to the peptidase C58 family. As to quaternary structure, interacts with human ARHA.

It is found in the secreted. Functionally, cysteine protease, which is translocated into infected cells and plays a central role in pathogenesis by cleaving the C-terminus end of the human small GTPase RhoA/ARHA, a regulator of cytoskeleton. Once cleaved, ARHA loses its lipid modification, and is released from the cell membrane, leading to the subsequent disruption of actin cytoskeleton of the host cell. This Yersinia enterocolitica serotype O:8 / biotype 1B (strain NCTC 13174 / 8081) protein is Cysteine protease yopT1 (yopT1).